We begin with the raw amino-acid sequence, 312 residues long: Putative S-adenosyl-L-methionine-dependent methyltransferase Mkms_0097 (312 aa).

S-adenosyl-L-methionine is bound by residues Asp-134 and 163 to 164; that span reads DL.

It belongs to the UPF0677 family.

Its function is as follows. Exhibits S-adenosyl-L-methionine-dependent methyltransferase activity. In Mycobacterium sp. (strain KMS), this protein is Putative S-adenosyl-L-methionine-dependent methyltransferase Mkms_0097.